Consider the following 441-residue polypeptide: uncharacterized protein (441 aa).

Transmembrane regions (helical) follow at residues M68–A88, A110–V130, G131–P151, S164–P184, G194–L214, A229–A246, S260–V280, A287–L307, V337–A357, V384–I404, and V412–G432.

Belongs to the major facilitator superfamily.

The protein resides in the cell membrane. This is an uncharacterized protein from Mycobacterium tuberculosis (strain ATCC 25618 / H37Rv).